The primary structure comprises 124 residues: Small ribosomal subunit protein uS12 (124 aa).

D89 carries the 3-methylthioaspartic acid modification.

It belongs to the universal ribosomal protein uS12 family. Part of the 30S ribosomal subunit. Contacts proteins S8 and S17. May interact with IF1 in the 30S initiation complex.

Its function is as follows. With S4 and S5 plays an important role in translational accuracy. In terms of biological role, interacts with and stabilizes bases of the 16S rRNA that are involved in tRNA selection in the A site and with the mRNA backbone. Located at the interface of the 30S and 50S subunits, it traverses the body of the 30S subunit contacting proteins on the other side and probably holding the rRNA structure together. The combined cluster of proteins S8, S12 and S17 appears to hold together the shoulder and platform of the 30S subunit. This Shewanella oneidensis (strain ATCC 700550 / JCM 31522 / CIP 106686 / LMG 19005 / NCIMB 14063 / MR-1) protein is Small ribosomal subunit protein uS12.